Here is a 253-residue protein sequence, read N- to C-terminus: Probable transcriptional regulatory protein Tpet_0454 (253 aa).

The protein belongs to the TACO1 family.

The protein localises to the cytoplasm. In Thermotoga petrophila (strain ATCC BAA-488 / DSM 13995 / JCM 10881 / RKU-1), this protein is Probable transcriptional regulatory protein Tpet_0454.